A 1108-amino-acid polypeptide reads, in one-letter code: Transmembrane protein 132C (1108 aa).

Positions 1–27 (MRSEGAAPGPAAPLCGALSLLLGALLG) are cleaved as a signal peptide. The Extracellular segment spans residues 28–922 (KVIEGHGVTD…LVQTPRGLSD (895 aa)). N-linked (GlcNAc...) asparagine glycans are attached at residues Asn-316 and Asn-373. Residues 820–836 (HASDRRQKGQHHERTGQ) are compositionally biased toward basic and acidic residues. The disordered stretch occupies residues 820 to 857 (HASDRRQKGQHHERTGQDGHLYGSSPVEREEGALRRAT). Residues 923–943 (LEIGMYALLGVFCLAILVFLI) traverse the membrane as a helical segment. At 944-1108 (NCATFALKYR…NYLEKLKDKA (165 aa)) the chain is on the cytoplasmic side. Residues 1022–1072 (QSQIHRSADSGGRQGREQKQDPLHSPTSKRKKVKFTTFTTIPPDDSCPTVN) are disordered.

This sequence belongs to the TMEM132 family.

It is found in the membrane. This Homo sapiens (Human) protein is Transmembrane protein 132C (TMEM132C).